Here is a 439-residue protein sequence, read N- to C-terminus: MLKVYIETMGCAMNSRDSEHLLSELSKLDYKETNDPKIADLILINTCSVREKPERKLFSEIGQFAKIKKPNAKIGVCGCTASHMGADILKKSPSVSFVLGARNVSKISQVIHKEKAVEVAIDYDESSYAFEFFEKKAEVRSLLNISIGCDKKCTYCIVPHTRGKEISIPMDLILKEAEKLANNGTKELMLLGQNVNNYGVRFSSEHAKVNFSDLLDKLSEIPGIERIRFTSPHPLHMNDEFLERFAKNPKVCKSIHMPLQSGSSAVLKMMRRGYNKEWFLNRVEKLKALVPEVGISTDIIVGFPNESDKDFEDTMEVLEKVCFDTLYSFIYSPRPFTEAGAWKERVPLEVSSLRLERLQNRHKEILEEKARLEVGKTHVVLVENRHEVDGQIVGFEGRSDTGKFIEVTCKEKRNPGELVEVEIISHVKGRLMATTKNNQ.

Positions 2-116 (LKVYIETMGC…ISQVIHKEKA (115 aa)) constitute an MTTase N-terminal domain. [4Fe-4S] cluster is bound by residues Cys11, Cys47, Cys79, Cys149, Cys153, and Cys156. Residues 135-368 (KKAEVRSLLN…QNRHKEILEE (234 aa)) enclose the Radical SAM core domain. The region spanning 371–437 (RLEVGKTHVV…KGRLMATTKN (67 aa)) is the TRAM domain.

It belongs to the methylthiotransferase family. MiaB subfamily. In terms of assembly, monomer. [4Fe-4S] cluster serves as cofactor.

The protein localises to the cytoplasm. The catalysed reaction is N(6)-dimethylallyladenosine(37) in tRNA + (sulfur carrier)-SH + AH2 + 2 S-adenosyl-L-methionine = 2-methylsulfanyl-N(6)-dimethylallyladenosine(37) in tRNA + (sulfur carrier)-H + 5'-deoxyadenosine + L-methionine + A + S-adenosyl-L-homocysteine + 2 H(+). In terms of biological role, catalyzes the methylthiolation of N6-(dimethylallyl)adenosine (i(6)A), leading to the formation of 2-methylthio-N6-(dimethylallyl)adenosine (ms(2)i(6)A) at position 37 in tRNAs that read codons beginning with uridine. The chain is tRNA-2-methylthio-N(6)-dimethylallyladenosine synthase from Helicobacter acinonychis (strain Sheeba).